The primary structure comprises 600 residues: Putative heme-binding protein NP_2262A (600 aa).

Position 180 (H180) interacts with heme. A disordered region spans residues 261 to 289 (TSETGHGGADSQTSSESSGGRPSTDPSHD). Polar residues predominate over residues 270-285 (DSQTSSESSGGRPSTD). Residues 510-598 (GTMGMFYTVK…VLADRPRHVF (89 aa)) enclose the ABM domain.

This sequence in the N-terminal section; belongs to the ChdC family.

In Natronomonas pharaonis (strain ATCC 35678 / DSM 2160 / CIP 103997 / JCM 8858 / NBRC 14720 / NCIMB 2260 / Gabara) (Halobacterium pharaonis), this protein is Putative heme-binding protein NP_2262A.